Consider the following 57-residue polypeptide: uncharacterized protein (57 aa).

The helical transmembrane segment at 34–54 (AALLDAAALVVIPGLLTAAAV) threads the bilayer.

It is found in the membrane. This is an uncharacterized protein from Dictyostelium discoideum (Social amoeba).